Reading from the N-terminus, the 207-residue chain is dTTP/UTP pyrophosphatase (207 aa).

Asp-79 (proton acceptor) is an active-site residue.

This sequence belongs to the Maf family. YhdE subfamily. A divalent metal cation serves as cofactor.

Its subcellular location is the cytoplasm. It carries out the reaction dTTP + H2O = dTMP + diphosphate + H(+). It catalyses the reaction UTP + H2O = UMP + diphosphate + H(+). In terms of biological role, nucleoside triphosphate pyrophosphatase that hydrolyzes dTTP and UTP. May have a dual role in cell division arrest and in preventing the incorporation of modified nucleotides into cellular nucleic acids. This chain is dTTP/UTP pyrophosphatase, found in Rhodopseudomonas palustris (strain BisB18).